A 436-amino-acid chain; its full sequence is 3-ketoacyl-CoA thiolase (436 aa).

Cys99 (acyl-thioester intermediate) is an active-site residue. Active-site proton acceptor residues include His392 and Cys422.

The protein belongs to the thiolase-like superfamily. Thiolase family. In terms of assembly, heterotetramer of two alpha chains (FadJ) and two beta chains (FadI).

It localises to the cytoplasm. The enzyme catalyses an acyl-CoA + acetyl-CoA = a 3-oxoacyl-CoA + CoA. It participates in lipid metabolism; fatty acid beta-oxidation. Functionally, catalyzes the final step of fatty acid oxidation in which acetyl-CoA is released and the CoA ester of a fatty acid two carbons shorter is formed. This chain is 3-ketoacyl-CoA thiolase, found in Salmonella paratyphi A (strain ATCC 9150 / SARB42).